We begin with the raw amino-acid sequence, 224 residues long: CDP-diacylglycerol--inositol 3-phosphatidyltransferase (224 aa).

The Cytoplasmic portion of the chain corresponds to 1-8 (MTIAEHDN). Residues 9–29 (VFIFVPNLIGYARIVLALIAF) form a helical membrane-spanning segment. The Lumenal portion of the chain corresponds to 30–35 (WFMSTN). The helical transmembrane segment at 36–52 (YVISGWCYVTSALLDAV) threads the bilayer. Asp50 and Asp53 together coordinate Mg(2+). Residues 53–76 (DGQAARAFNQSTRFGAMLDQLTDR) lie on the Cytoplasmic side of the membrane. Gly54, Arg58, and Thr64 together coordinate a CDP-1,2-diacyl-sn-glycerol. Mg(2+) is bound by residues Asp71 and Asp75. The Proton acceptor role is filled by Asp75. The chain crosses the membrane as a helical span at residues 77–97 (CGTTGLLVTLAYFYPRYMFWF). Position 98 (Gln98) is a topological domain, lumenal. Residues 99 to 119 (LSIAIDVACHWLFMQTSVVVG) form a helical membrane-spanning segment. Topologically, residues 120 to 138 (RSSHKVNDNFIMRLYYQKD) are cytoplasmic. A helical membrane pass occupies residues 139–159 (ILTFMCCVNELFYVCLYLLHF). Residues 160–163 (TYGP) lie on the Lumenal side of the membrane. Residues 164–184 (LIFGASLFKILAFLTGPFAVL) traverse the membrane as a helical segment. The Cytoplasmic portion of the chain corresponds to 185 to 224 (KALISVMHAYVAGIDLAAVDVRERQERRQKSEPVSGKKVE).

It belongs to the CDP-alcohol phosphatidyltransferase class-I family. The cofactor is Mn(2+). Mg(2+) serves as cofactor. In terms of tissue distribution, in adults, expression is higher in the head than in the body (at protein level).

Its subcellular location is the apical cell membrane. The protein resides in the lateral cell membrane. The enzyme catalyses a CDP-1,2-diacyl-sn-glycerol + myo-inositol = a 1,2-diacyl-sn-glycero-3-phospho-(1D-myo-inositol) + CMP + H(+). Functionally, catalyzes the biosynthesis of phosphatidylinositol (PtdIns) as well as PtdIns:inositol exchange reaction. May thus act to reduce an excessive cellular PtdIns content. The exchange activity is due to the reverse reaction of PtdIns synthase and is dependent on CMP, which is tightly bound to the enzyme. Required for the regeneration of the signaling molecule phosphatidylinositol 4,5-bisphosphate (PtdInsP2) from phosphatidic acid (PA) and maintenance of its steady supply during signaling, thus playing an essential role during phospholipase C-mediated transduction. This function is essential in photoreceptors for light-activated recycling of PtdInsP2 during phototransduction. As a key enzyme of the phosphoinositide pathway, indirectly involved in the polarized secretion of basal membrane (BM) proteins in follicle epithelial (FE) cells through promoting PtdInsP2 synthesis in the apical and lateral plasma membranes of FE cells. PtdInsP2 controls the localization of Crag and perhaps the localization and expression of strat, both of which are essential for restricting the secretion of BM proteins to the basal surface. The polypeptide is CDP-diacylglycerol--inositol 3-phosphatidyltransferase (Drosophila melanogaster (Fruit fly)).